The chain runs to 171 residues: Co-chaperone protein HscB (171 aa).

Residues 2 to 74 (DYFTLFGLPA…LTRAEYLLSL (73 aa)) form the J domain.

Belongs to the HscB family. As to quaternary structure, interacts with HscA and stimulates its ATPase activity. Interacts with IscU.

Co-chaperone involved in the maturation of iron-sulfur cluster-containing proteins. Seems to help targeting proteins to be folded toward HscA. This is Co-chaperone protein HscB from Salmonella choleraesuis (strain SC-B67).